The sequence spans 572 residues: Arginine--tRNA ligase (572 aa).

The 'HIGH' region signature appears at 122–132 (PNLAKEMHVGH).

Belongs to the class-I aminoacyl-tRNA synthetase family. In terms of assembly, monomer.

The protein localises to the cytoplasm. It carries out the reaction tRNA(Arg) + L-arginine + ATP = L-arginyl-tRNA(Arg) + AMP + diphosphate. The sequence is that of Arginine--tRNA ligase from Neisseria gonorrhoeae (strain NCCP11945).